A 217-amino-acid chain; its full sequence is Coiled-coil domain-containing protein 124-A (217 aa).

Positions 1–128 are disordered; it reads MPKKFQGENT…HLEMPLEENV (128 aa). Composition is skewed to basic and acidic residues over residues 18-45, 52-74, and 95-128; these read RKAE…DDKH, RKED…QRLL, and TRAE…EENV. Residues 46 to 82 are a coiled coil; that stretch reads VARKGQRKEDKEKKRLEQLERKKESQRLLDEEDSKMK.

The protein belongs to the CCDC124 family. In terms of assembly, associates with translationally inactive ribosomes in the nonrotated state.

It is found in the cytoplasm. Its subcellular location is the cytoskeleton. The protein resides in the microtubule organizing center. The protein localises to the centrosome. It localises to the midbody. In terms of biological role, ribosome-binding protein involved in ribosome hibernation: associates with translationally inactive ribosomes and stabilizes the nonrotated conformation of the 80S ribosome, thereby promoting ribosome preservation and storage. This chain is Coiled-coil domain-containing protein 124-A (ccdc124-a), found in Xenopus laevis (African clawed frog).